Consider the following 419-residue polypeptide: eIF5-mimic protein 1 (419 aa).

Residues 1-22 (MNKHQKPVLTGQRFKTRKRDEK) are disordered. K117 is modified (N6-acetyllysine). Residues 248–415 (VQQSLGTRKE…QNAEEESESE (168 aa)) enclose the W2 domain. A phosphoserine mark is found at S412, S414, and S419.

It belongs to the BZW family. As to quaternary structure, interacts with EIF3E, EIF2S2 and EIF3C.

It localises to the cytoplasm. In terms of biological role, translation initiation regulator which represses non-AUG initiated translation and repeat-associated non-AUG (RAN) initiated translation by acting as a competitive inhibitor of eukaryotic translation initiation factor 5 (EIF5) function. Increases the accuracy of translation initiation by impeding EIF5-dependent translation from non-AUG codons by competing with it for interaction with EIF2S2 within the 43S pre-initiation complex (PIC) in an EIF3C-binding dependent manner. The sequence is that of eIF5-mimic protein 1 (Bzw2) from Mus musculus (Mouse).